Here is a 74-residue protein sequence, read N- to C-terminus: Cytochrome c oxidase assembly factor 5 (74 aa).

Residues 27-65 (ESDCVVQEGKSPRQCLKEGYCNSLKYAFFECKRSVLDNR) enclose the CHCH domain. The Cx10C motif signature appears at 30 to 41 (CVVQEGKSPRQC). Disulfide bonds link cysteine 30–cysteine 57 and cysteine 41–cysteine 47. The residue at position 37 (serine 37) is a Phosphoserine. The Cx9C motif signature appears at 47–57 (CNSLKYAFFEC).

The protein belongs to the PET191 family.

Involved in an early step of the mitochondrial complex IV assembly process. The chain is Cytochrome c oxidase assembly factor 5 (Coa5) from Pongo abelii (Sumatran orangutan).